Reading from the N-terminus, the 441-residue chain is 23S rRNA (uracil(1939)-C(5))-methyltransferase RlmD (441 aa).

The region spanning 1–56 is the TRAM domain; sequence MSIDSLDMEARGVGRLLNEDGTPGKVIFVEGALPGETVSYRSFRRKPSYEQAHLVE. Residues Cys-69, Cys-75, Cys-78, and Cys-157 each contribute to the [4Fe-4S] cluster site. S-adenosyl-L-methionine is bound by residues Gln-265, Phe-294, Asn-299, Glu-315, Asn-343, and Asp-364. Cys-397 (nucleophile) is an active-site residue.

The protein belongs to the class I-like SAM-binding methyltransferase superfamily. RNA M5U methyltransferase family. RlmD subfamily.

The catalysed reaction is uridine(1939) in 23S rRNA + S-adenosyl-L-methionine = 5-methyluridine(1939) in 23S rRNA + S-adenosyl-L-homocysteine + H(+). In terms of biological role, catalyzes the formation of 5-methyl-uridine at position 1939 (m5U1939) in 23S rRNA. This Cupriavidus necator (strain ATCC 17699 / DSM 428 / KCTC 22496 / NCIMB 10442 / H16 / Stanier 337) (Ralstonia eutropha) protein is 23S rRNA (uracil(1939)-C(5))-methyltransferase RlmD.